A 555-amino-acid polypeptide reads, in one-letter code: Cyclin-T1.2 (555 aa).

Disordered regions lie at residues 315 to 429 (SYKG…NSSK) and 505 to 555 (PADS…GELV). Low complexity predominate over residues 321–335 (KPLSNSSDSPSTRPS). Residues 341–359 (KNQKVVEQELMEQRMKEAA) show a composition bias toward basic and acidic residues. A compositionally biased stretch (low complexity) spans 382–398 (TSSSASNNSNHQNRSSS). Pro residues predominate over residues 521–543 (PDEPSPPVSQILLPPPPPPPILP).

This sequence belongs to the cyclin family. Cyclin C subfamily.

Functionally, regulatory subunit of the cyclin-dependent kinase pair (CDK9/cyclin T) complex, also called positive transcription elongation factor B (P-TEFb), which is proposed to facilitate the transition from abortive to production elongation by phosphorylating the CTD (carboxy-terminal domain) of the large subunit of RNA polymerase II (RNAP II). The chain is Cyclin-T1.2 (cit-1.2) from Caenorhabditis elegans.